The chain runs to 193 residues: MACSKMDVDKQCCICLDDEDVDRDNTIPCRHTVCRTCYVKPMLDQCPVCREPWEARKNDESAEEYTGRHYFHTYRNGGYRGVPRFESTWGLSIDEERWQNYVQHIRPLYQGFLDERIIFENPIPVNMEYPLWEDIPHTRYLWTILKSIIINAKKIVKDVTNVPPFSPEVLEQFDDFFHEEPSRDKCTFPLRSQ.

The RING-type zinc finger occupies 12-50 (CCICLDDEDVDRDNTIPCRHTVCRTCYVKPMLDQCPVCR).

The sequence is that of Putative RING finger protein ORF38 from Magallana gigas (Pacific oyster).